The following is a 496-amino-acid chain: Cytochrome P450 monooxygenase ausR (496 aa).

A helical transmembrane segment spans residues 12–32 (IGLYILWTIPVLFVIFKLLAP). Cys-435 is a heme binding site.

Belongs to the cytochrome P450 family. The cofactor is heme.

The protein localises to the membrane. It functions in the pathway secondary metabolite biosynthesis; terpenoid biosynthesis. Functionally, cytochrome P450 monooxygenase; part of the gene cluster B that mediates the biosynthesis of the fungal meroterpenoid acetoxydehydroaustin. The first step of the pathway is the synthesis of 3,5-dimethylorsellinic acid by the polyketide synthase ausA. 3,5-dimethylorsellinic acid is then prenylated by the polyprenyl transferase ausN. Further epoxidation by the FAD-dependent monooxygenase ausM and cyclization by the probable terpene cyclase ausL lead to the formation of protoaustinoid A. Protoaustinoid A is then oxidized to spiro-lactone preaustinoid A3 by the combined action of the FAD-binding monooxygenases ausB and ausC, and the dioxygenase ausE. Acid-catalyzed keto-rearrangement and ring contraction of the tetraketide portion of preaustinoid A3 by ausJ lead to the formation of preaustinoid A4. The aldo-keto reductase ausK, with the help of ausH, is involved in the next step by transforming preaustinoid A4 into isoaustinone which is in turn hydroxylated by the P450 monooxygenase ausI to form austinolide. The cytochrome P450 monooxygenase ausG then modifies austinolide to austinol. Austinol is further acetylated to austin by the O-acetyltransferase ausP, which spontaneously changes to dehydroaustin. The cytochrome P450 monooxygenase then converts dehydroaustin is into 7-dehydrodehydroaustin. The hydroxylation catalyzed by ausR permits the second O-acetyltransferase ausQ to add an additional acetyl group to the molecule, leading to the formation of acetoxydehydroaustin. Due to genetic rearrangements of the clusters and the subsequent loss of some enzymes, the end product of the Penicillium brasilianum austinoid biosynthesis clusters is acetoxydehydroaustin. The sequence is that of Cytochrome P450 monooxygenase ausR from Penicillium brasilianum.